Consider the following 236-residue polypeptide: Ribose-5-phosphate isomerase A 2 (236 aa).

Substrate is bound by residues 31-34 (SGTT), 86-89 (DGPD), and 99-102 (KGGG). Glu108 (proton acceptor) is an active-site residue. Lys126 serves as a coordination point for substrate.

The protein belongs to the ribose 5-phosphate isomerase family. Homodimer.

The catalysed reaction is aldehydo-D-ribose 5-phosphate = D-ribulose 5-phosphate. The protein operates within carbohydrate degradation; pentose phosphate pathway; D-ribose 5-phosphate from D-ribulose 5-phosphate (non-oxidative stage): step 1/1. Catalyzes the reversible conversion of ribose-5-phosphate to ribulose 5-phosphate. In Yersinia pestis, this protein is Ribose-5-phosphate isomerase A 2.